We begin with the raw amino-acid sequence, 80 residues long: Large ribosomal subunit protein bL28 (80 aa).

Residues 1–23 are disordered; that stretch reads MARVCQITGKKTRTGNNVSHANN.

It belongs to the bacterial ribosomal protein bL28 family.

In Cytophaga hutchinsonii (strain ATCC 33406 / DSM 1761 / CIP 103989 / NBRC 15051 / NCIMB 9469 / D465), this protein is Large ribosomal subunit protein bL28.